We begin with the raw amino-acid sequence, 299 residues long: F-actin-capping protein subunit alpha-3 (299 aa).

2 positions are modified to phosphoserine: Ser2 and Ser290.

This sequence belongs to the F-actin-capping protein alpha subunit family. Component of the F-actin capping complex, composed of a heterodimer of an alpha and a beta subunit. Component of the WASH complex, composed of F-actin-capping protein subunit alpha (CAPZA1, CAPZA2 or CAPZA3), F-actin-capping protein subunit beta (CAPZB), WASHC1, WASHC2, WASHC3, WASHC4 and WASHC5. Exclusively expressed in the testis.

Its subcellular location is the cytoplasm. It localises to the cytoskeleton. Its function is as follows. F-actin-capping proteins bind in a Ca(2+)-independent manner to the fast growing ends of actin filaments (barbed end) thereby blocking the exchange of subunits at these ends. Unlike other capping proteins (such as gelsolin and severin), these proteins do not sever actin filaments. May play a role in the morphogenesis of spermatid. The chain is F-actin-capping protein subunit alpha-3 (Capza3) from Rattus norvegicus (Rat).